Reading from the N-terminus, the 221-residue chain is Tetraspanin-2 (221 aa).

Residues 1 to 13 lie on the Cytoplasmic side of the membrane; sequence MGRFRGGLRCIKY. A helical transmembrane segment spans residues 14-34; the sequence is LLLGFNLLFWLAGSAVIAFGL. The Extracellular portion of the chain corresponds to 35-54; the sequence is WFRFGGAIKELSSEDKSPEY. Residues 55-75 traverse the membrane as a helical segment; that stretch reads FYVGLYVLVGAGALMMAVGFF. At 76–90 the chain is on the cytoplasmic side; the sequence is GCCGAMRESQCVLGS. The chain crosses the membrane as a helical span at residues 91–111; that stretch reads FFTCLLVIFAAEVTTGVFAFI. Topologically, residues 112–188 are extracellular; sequence GKGVAIRHVQ…ETIISVKLQL (77 aa). Asparagine 139 is a glycosylation site (N-linked (GlcNAc...) asparagine). Residues 189 to 209 traverse the membrane as a helical segment; that stretch reads IGIVGIGIAGLTIFGMIFSMV. At 210–221 the chain is on the cytoplasmic side; that stretch reads LCCAIRNSRDVI.

This sequence belongs to the tetraspanin (TM4SF) family.

Its subcellular location is the membrane. Its function is as follows. May play a role in signalling in oligodendrocytes in the early stages of their terminal differentiation into myelin-forming glia and may also function in stabilizing the mature sheath. The protein is Tetraspanin-2 (TSPAN2) of Homo sapiens (Human).